We begin with the raw amino-acid sequence, 407 residues long: Arginine deiminase (407 aa).

C397 serves as the catalytic Amidino-cysteine intermediate.

It belongs to the arginine deiminase family.

It is found in the cytoplasm. The catalysed reaction is L-arginine + H2O = L-citrulline + NH4(+). It participates in amino-acid degradation; L-arginine degradation via ADI pathway; carbamoyl phosphate from L-arginine: step 1/2. This chain is Arginine deiminase, found in Vibrio cholerae serotype O1 (strain ATCC 39541 / Classical Ogawa 395 / O395).